Here is a 293-residue protein sequence, read N- to C-terminus: Ribosomal protein L11 methyltransferase (293 aa).

Thr-145, Gly-166, Asp-188, and Asn-230 together coordinate S-adenosyl-L-methionine.

This sequence belongs to the methyltransferase superfamily. PrmA family.

It localises to the cytoplasm. It carries out the reaction L-lysyl-[protein] + 3 S-adenosyl-L-methionine = N(6),N(6),N(6)-trimethyl-L-lysyl-[protein] + 3 S-adenosyl-L-homocysteine + 3 H(+). Its function is as follows. Methylates ribosomal protein L11. This Escherichia coli O81 (strain ED1a) protein is Ribosomal protein L11 methyltransferase.